We begin with the raw amino-acid sequence, 115 residues long: Large ribosomal subunit protein P2 (115 aa).

Position 1 is an N-acetylmethionine (Met1). A phosphoserine mark is found at Ser17 and Ser19. N6-acetyllysine; alternate is present on Lys21. An N6-succinyllysine; alternate modification is found at Lys21. Positions 76–90 are enriched in low complexity; it reads APGSAAPAAGSAPAA. Residues 76–115 are disordered; that stretch reads APGSAAPAAGSAPAAAEERKEEKKEESEESDDDMGFGLFD. Residues Ser79 and Ser86 each carry the phosphoserine modification. Over residues 91–101 the composition is skewed to basic and acidic residues; that stretch reads AEERKEEKKEE. 2 positions are modified to phosphoserine: Ser102 and Ser105.

It belongs to the eukaryotic ribosomal protein P1/P2 family. As to quaternary structure, heterodimer with RPLP1 at the lateral ribosomal stalk of the large ribosomal subunit.

In terms of biological role, plays an important role in the elongation step of protein synthesis. The chain is Large ribosomal subunit protein P2 (RPLP2) from Equus caballus (Horse).